Consider the following 118-residue polypeptide: Large ribosomal subunit protein bL20 (118 aa).

Belongs to the bacterial ribosomal protein bL20 family.

Binds directly to 23S ribosomal RNA and is necessary for the in vitro assembly process of the 50S ribosomal subunit. It is not involved in the protein synthesizing functions of that subunit. The sequence is that of Large ribosomal subunit protein bL20 from Klebsiella pneumoniae (strain 342).